We begin with the raw amino-acid sequence, 252 residues long: Imidazole glycerol phosphate synthase subunit HisF (252 aa).

Active-site residues include D11 and D130.

Belongs to the HisA/HisF family. As to quaternary structure, heterodimer of HisH and HisF.

It is found in the cytoplasm. The enzyme catalyses 5-[(5-phospho-1-deoxy-D-ribulos-1-ylimino)methylamino]-1-(5-phospho-beta-D-ribosyl)imidazole-4-carboxamide + L-glutamine = D-erythro-1-(imidazol-4-yl)glycerol 3-phosphate + 5-amino-1-(5-phospho-beta-D-ribosyl)imidazole-4-carboxamide + L-glutamate + H(+). It functions in the pathway amino-acid biosynthesis; L-histidine biosynthesis; L-histidine from 5-phospho-alpha-D-ribose 1-diphosphate: step 5/9. In terms of biological role, IGPS catalyzes the conversion of PRFAR and glutamine to IGP, AICAR and glutamate. The HisF subunit catalyzes the cyclization activity that produces IGP and AICAR from PRFAR using the ammonia provided by the HisH subunit. This Acinetobacter baylyi (strain ATCC 33305 / BD413 / ADP1) protein is Imidazole glycerol phosphate synthase subunit HisF.